Reading from the N-terminus, the 464-residue chain is Glutamate decarboxylase beta (464 aa).

Lys275 is subject to N6-(pyridoxal phosphate)lysine.

The protein belongs to the group II decarboxylase family. The cofactor is pyridoxal 5'-phosphate.

The catalysed reaction is L-glutamate + H(+) = 4-aminobutanoate + CO2. In terms of biological role, converts internalized glutamate to GABA and increases the internal pH. Involved in glutamate-dependent acid resistance in gastric fluid. In Listeria innocua serovar 6a (strain ATCC BAA-680 / CLIP 11262), this protein is Glutamate decarboxylase beta (gadB).